A 704-amino-acid chain; its full sequence is Rabphilin-3A (704 aa).

Residues 1 to 12 show a composition bias toward polar residues; it reads MTDTVFSSSSSR. The interval 1–52 is disordered; the sequence is MTDTVFSSSSSRWMCPSDRPLQSNDKEQLQTGWSVHPSGQPDRQRKQEELTD. One can recognise a RabBD domain in the interval 44–161; sequence QRKQEELTDE…KRSGAWFFKG (118 aa). Residues 92-149 form an FYVE-type zinc finger; the sequence is GDGVNRCILCGEQLGMLGSACVVCEDCKKNVCTKCGVETSNNRPHPVWLCKICIEQRE. Residues C98, C101, C115, C118, C123, C126, C141, and C144 each coordinate Zn(2+). A disordered region spans residues 167 to 398; that stretch reads LPQPMPIKKN…EEEANSYDSD (232 aa). Residues 205–214 show a composition bias toward basic and acidic residues; the sequence is TRGDTEDRRG. At R229 the chain carries Omega-N-methylarginine. S277 is subject to Phosphoserine. A compositionally biased stretch (low complexity) spans 279 to 290; the sequence is QASRPAPASMQS. Residues 291 to 310 are compositionally biased toward pro residues; it reads PAPPQPGQPGPPGGSRPSPG. Positions 366 to 380 are enriched in low complexity; the sequence is QASAAAPQPVVASAR. The segment covering 385–398 has biased composition (acidic residues); the sequence is PEEDEEEANSYDSD. Residues 402 to 524 form the C2 1 domain; it reads TLGALEFSLL…KPNQRKNFNI (123 aa). The Ca(2+) site is built by M432, D433, D439, D494, E495, D496, E502, E549, D591, D597, D651, Y652, D653, and D659. One can recognise a C2 2 domain in the interval 560–693; that stretch reads ERGKILVSLM…NKDKKIERWH (134 aa). Phosphoserine occurs at positions 702 and 703.

Interacts with RAB3B, RAB3C, RAB3D, RAB8A, RAB27A and RAB27B. Interacts with RAB3A; this interaction recruits RPH3A to synaptic vesicules. Interacts (via C2B domain) with SNAP25. Interacts with deubiquitinating enzyme CAND1; this interaction results in the deubiquitination of RPH3A. Interacts with GRIN2A and DLG4; this ternary complex regulates NMDA receptor composition at postsynaptic membranes. Interacts with SNCA. Ca(2+) is required as a cofactor. Ubiquitinated. Deubiquitinated by CAND1 to prevent its degradation. In terms of tissue distribution, specifically expressed in brain.

It is found in the cytoplasmic vesicle. The protein resides in the secretory vesicle. The protein localises to the synaptic vesicle membrane. Its subcellular location is the cell projection. It localises to the dendritic spine. It is found in the postsynaptic cell membrane. The protein resides in the membrane. Plays an essential role in docking and fusion steps of regulated exocytosis. At the presynaptic level, RPH3A is recruited by RAB3A to the synaptic vesicle membrane in a GTP-dependent manner where it modulates synaptic vesicle trafficking and calcium-triggered neurotransmitter release. In the post-synaptic compartment, forms a ternary complex with GRIN2A and DLG4 and regulates NMDA receptor stability. Also plays a role in the exocytosis of arginine vasopressin hormone. This chain is Rabphilin-3A (RPH3A), found in Bos taurus (Bovine).